We begin with the raw amino-acid sequence, 91 residues long: Large ribosomal subunit protein uL23 (91 aa).

It belongs to the universal ribosomal protein uL23 family. As to quaternary structure, part of the 50S ribosomal subunit. Contacts protein L29, and trigger factor when it is bound to the ribosome.

One of the early assembly proteins it binds 23S rRNA. One of the proteins that surrounds the polypeptide exit tunnel on the outside of the ribosome. Forms the main docking site for trigger factor binding to the ribosome. This is Large ribosomal subunit protein uL23 from Staphylococcus aureus (strain USA300).